Consider the following 100-residue polypeptide: Small ribosomal subunit protein uS14 (100 aa).

This sequence belongs to the universal ribosomal protein uS14 family. Part of the 30S ribosomal subunit. Contacts proteins S3 and S10.

In terms of biological role, binds 16S rRNA, required for the assembly of 30S particles and may also be responsible for determining the conformation of the 16S rRNA at the A site. The protein is Small ribosomal subunit protein uS14 of Picosynechococcus sp. (strain ATCC 27264 / PCC 7002 / PR-6) (Agmenellum quadruplicatum).